Consider the following 528-residue polypeptide: Putative galacturonosyltransferase 2 (528 aa).

This sequence belongs to the glycosyltransferase 8 family.

It functions in the pathway glycan metabolism; pectin biosynthesis. Functionally, may be involved in pectin and/or xylans biosynthesis in cell walls. The protein is Putative galacturonosyltransferase 2 (GAUT2) of Arabidopsis thaliana (Mouse-ear cress).